Here is a 705-residue protein sequence, read N- to C-terminus: ATP-dependent DNA helicase Q-like 2 (705 aa).

Residues 1-30 are a coiled coil; it reads MESEAIQEDLQNLDVELKDVQGQISALIEH. The 176-residue stretch at 98–273 folds into the Helicase ATP-binding domain; the sequence is INAIMTGRDV…IEMLHIPKCV (176 aa). 111 to 118 contributes to the ATP binding site; it reads MAAGGGKS. Residues 217–220 carry the DEAH box motif; it reads DEAH. The 153-residue stretch at 298–450 folds into the Helicase C-terminal domain; sequence VVDEIAEFIR…DIVRYCQSKT (153 aa). In terms of domain architecture, HRDC spans 591–670; sequence SITFSGLELK…MRHEAVSEQL (80 aa). Residues 668–705 form a disordered region; it reads EQLVEDPTKEETCKSRLRKRAKTQKDVVLVESSGEEEA.

This sequence belongs to the helicase family. RecQ subfamily. In terms of assembly, interacts with WEX. Mg(2+) is required as a cofactor. Requires Mn(2+) as cofactor. Expressed in shoots and flowers. Expressed in young leaves, inflorescences, roots, shoot apical meristem, young siliques, and mature green siliques.

Its subcellular location is the nucleus. It catalyses the reaction Couples ATP hydrolysis with the unwinding of duplex DNA by translocating in the 3'-5' direction.. The catalysed reaction is ATP + H2O = ADP + phosphate + H(+). Functionally, 3'-5' DNA helicase that may play a role in the repair of DNA. Its DNA unwinding activity in vitro is dependent on magnesium, and ATP or dATP. Can use GTP/dGTP, CTP/dCTP or UTP/dUTP as nucleotide cofactors. Catalyzes Holliday junction branch migration and replication fork regression. Disrupts D-loop structures. Unwinds G-quadruplex DNA, found in telomeric DNA. The chain is ATP-dependent DNA helicase Q-like 2 from Arabidopsis thaliana (Mouse-ear cress).